A 60-amino-acid chain; its full sequence is Large ribosomal subunit protein uL30 (60 aa).

Belongs to the universal ribosomal protein uL30 family. In terms of assembly, part of the 50S ribosomal subunit.

The sequence is that of Large ribosomal subunit protein uL30 from Lysinibacillus sphaericus (strain C3-41).